Consider the following 454-residue polypeptide: uncharacterized protein (454 aa).

The 42-residue stretch at 364-405 (CSRPGCDAPAYHSEVHHVTPWTTTHRTDINDLTLACGPDNRL) folds into the HNH domain.

Belongs to the Rv1128c/1148c/1588c/1702c/1945/3466 family.

This is an uncharacterized protein from Mycobacterium tuberculosis (strain ATCC 25618 / H37Rv).